Reading from the N-terminus, the 364-residue chain is Membrane-bound lytic murein transglycosylase C (364 aa).

Residues 1-19 (MNKYKKFLPLLVLIPFLAS) form the signal peptide. Residue C20 is the site of N-palmitoyl cysteine attachment. C20 is lipidated: S-diacylglycerol cysteine.

It belongs to the transglycosylase Slt family.

It is found in the cell outer membrane. It carries out the reaction Exolytic cleavage of the (1-&gt;4)-beta-glycosidic linkage between N-acetylmuramic acid (MurNAc) and N-acetylglucosamine (GlcNAc) residues in peptidoglycan, from either the reducing or the non-reducing ends of the peptidoglycan chains, with concomitant formation of a 1,6-anhydrobond in the MurNAc residue.. Its function is as follows. Murein-degrading enzyme. May play a role in recycling of muropeptides during cell elongation and/or cell division. This is Membrane-bound lytic murein transglycosylase C from Glaesserella parasuis serovar 5 (strain SH0165) (Haemophilus parasuis).